The primary structure comprises 228 residues: Phosphoenolpyruvate guanylyltransferase (228 aa).

Residues T148, G164, and S167 each contribute to the phosphoenolpyruvate site.

It belongs to the CofC family.

The catalysed reaction is phosphoenolpyruvate + GTP + H(+) = enolpyruvoyl-2-diphospho-5'-guanosine + diphosphate. The protein operates within cofactor biosynthesis; coenzyme F420 biosynthesis. In terms of biological role, guanylyltransferase that catalyzes the activation of phosphoenolpyruvate (PEP) as enolpyruvoyl-2-diphospho-5'-guanosine, via the condensation of PEP with GTP. It is involved in the biosynthesis of coenzyme F420, a hydride carrier cofactor. The polypeptide is Phosphoenolpyruvate guanylyltransferase (Thermomonospora curvata (strain ATCC 19995 / DSM 43183 / JCM 3096 / KCTC 9072 / NBRC 15933 / NCIMB 10081 / Henssen B9)).